The sequence spans 125 residues: Large ribosomal subunit protein bL12 (125 aa).

This sequence belongs to the bacterial ribosomal protein bL12 family. Homodimer. Part of the ribosomal stalk of the 50S ribosomal subunit. Forms a multimeric L10(L12)X complex, where L10 forms an elongated spine to which 2 to 4 L12 dimers bind in a sequential fashion. Binds GTP-bound translation factors.

Functionally, forms part of the ribosomal stalk which helps the ribosome interact with GTP-bound translation factors. Is thus essential for accurate translation. This chain is Large ribosomal subunit protein bL12, found in Bradyrhizobium sp. (strain ORS 278).